The chain runs to 59 residues: UPF0434 protein Mmc1_0910 (59 aa).

Belongs to the UPF0434 family.

The polypeptide is UPF0434 protein Mmc1_0910 (Magnetococcus marinus (strain ATCC BAA-1437 / JCM 17883 / MC-1)).